A 428-amino-acid chain; its full sequence is Homocitrate synthase, cytosolic isozyme (428 aa).

The 254-residue stretch at 23 to 276 (FQLIDSTLRE…KSKYKLHKIR (254 aa)) folds into the Pyruvate carboxyltransferase domain. Arg31 contacts 2-oxoglutarate. Glu32 is a binding site for Mg(2+). 2-oxoglutarate-binding residues include His91, Arg151, and Thr185. Positions 212 and 214 each coordinate Mg(2+). His309 serves as the catalytic Proton acceptor. Ser385 is subject to Phosphoserine. Thr396 is subject to Phosphothreonine. The tract at residues 399-428 (VLSAKKNKKNDSDVPELATIPAAKRTKPSA) is disordered. Ser401 and Ser410 each carry phosphoserine.

The protein belongs to the alpha-IPM synthase/homocitrate synthase family. Homocitrate synthase LYS20/LYS21 subfamily. It depends on Mg(2+) as a cofactor. The cofactor is Mn(2+).

The protein localises to the cytoplasm. It carries out the reaction acetyl-CoA + 2-oxoglutarate + H2O = (2R)-homocitrate + CoA + H(+). The protein operates within amino-acid biosynthesis; L-lysine biosynthesis via AAA pathway; L-alpha-aminoadipate from 2-oxoglutarate: step 1/5. Functionally, catalyzes the aldol-type condensation of 2-oxoglutarate with acetyl-CoA to yield homocitrate. Carries out the first step of the alpha-aminoadipate (AAA) lysine biosynthesis pathway. This is Homocitrate synthase, cytosolic isozyme (LYS20) from Saccharomyces cerevisiae (strain ATCC 204508 / S288c) (Baker's yeast).